The sequence spans 476 residues: ATP synthase subunit beta (476 aa).

154–161 (GGAGVGKT) is an ATP binding site.

Belongs to the ATPase alpha/beta chains family. In terms of assembly, F-type ATPases have 2 components, CF(1) - the catalytic core - and CF(0) - the membrane proton channel. CF(1) has five subunits: alpha(3), beta(3), gamma(1), delta(1), epsilon(1). CF(0) has four main subunits: a(1), b(1), b'(1) and c(9-12).

The protein resides in the cell inner membrane. It catalyses the reaction ATP + H2O + 4 H(+)(in) = ADP + phosphate + 5 H(+)(out). Functionally, produces ATP from ADP in the presence of a proton gradient across the membrane. The catalytic sites are hosted primarily by the beta subunits. This chain is ATP synthase subunit beta, found in Rhodopseudomonas palustris (strain BisB5).